The primary structure comprises 736 residues: MRPDEEDGTTKSPGSRWTRIWAIIALILLILFLLVLGAAIYFYINYKDSSDVCLSPGCIKTASVILSSMNSSVDPCDDFYEFACGQWIKGHPIPDDAPSVSNFENLGQDLEFALKELLDENDEPYDYETSAVGKAKYFYNLCLNESEILDNWRTTFDEVVKSFGGWPSLGHQMKPDASIEMLYADMVAKFKADSLFKATVQPDDKNSQRHVLLIDQPQLNLFARDFYVAAENEERMAYLQLIRDVLILLDADRTRATLDAKEIIDFETALANITMADEHRHDIAELYTKITLGEMRRSLPHFNWPLFFNRMFKDLHEKNGKRITFDDNTEVVVYGYEFLRRLDVLIPQYDNRLIVNYLEWCWFFKTMLRDLPDPFALTIFKFYKTLNIMNVQKVRWHGCVTRINSLMPMATSAIYVKNHFDHEAKQQVEEMISLIMESFVDLLLSEDWLTKETKQTAKQKVNEMKRKIGYPDYLNDPAAVNNEYKTFKVYPGHYYQTKFSFYEQYQRDVLERITEAVDRERWVAGAALVNAFYSPNTNEIIFPAGILQPVFYSKDFPSSMNFGGIGVVIGHEITHGFDDRGRLYDNLGNIRQWWDNATISKFEHKAQCIEKQYSSYVLDQINMQINGKSTKGENIADNGGLKQAYRAYKKYEKRHSRPPRLPGVNLTHDQLFFLNYAQIWCGTMNDKEAIRKLRTSEHSPGPIRVKGPLSNSYDFAKAYNCEPGSQMNPREKCRVW.

At 1–19 the chain is on the cytoplasmic side; the sequence is MRPDEEDGTTKSPGSRWTR. The helical; Signal-anchor for type II membrane protein transmembrane segment at 20–40 threads the bilayer; it reads IWAIIALILLILFLLVLGAAI. The Extracellular portion of the chain corresponds to 41 to 736; that stretch reads YFYINYKDSS…MNPREKCRVW (696 aa). A Peptidase M13 domain is found at 52–736; the sequence is VCLSPGCIKT…MNPREKCRVW (685 aa). Cystine bridges form between Cys-53/Cys-58, Cys-76/Cys-721, Cys-84/Cys-681, Cys-142/Cys-399, and Cys-608/Cys-733. Residues 103–123 adopt a coiled-coil conformation; that stretch reads FENLGQDLEFALKELLDENDE. Residue His-571 coordinates Zn(2+). Glu-572 is a catalytic residue. Positions 575 and 633 each coordinate Zn(2+). The active-site Proton donor is the Asp-637.

Belongs to the peptidase M13 family. The cofactor is Zn(2+). Expressed in muscle cells, GLR cells, SMB motor neurons and AIM interneurons.

Its subcellular location is the membrane. Required for olfactory plasticity, which is the change from positive chemotaxis to dispersal after prolonged exposure to an odorant. Thought to antagonise snet-1 by degrading excess snet-1 peptides and thus enabling olfactory plasticity. This Caenorhabditis elegans protein is Neprilysin-2.